The chain runs to 263 residues: Phosphonoacetaldehyde hydrolase (263 aa).

Asp10 acts as the Nucleophile in catalysis. Asp10 and Ala12 together coordinate Mg(2+). Residue Lys51 is the Schiff-base intermediate with substrate of the active site. Position 184 (Asp184) interacts with Mg(2+).

It belongs to the HAD-like hydrolase superfamily. PhnX family. Homodimer. It depends on Mg(2+) as a cofactor.

The catalysed reaction is phosphonoacetaldehyde + H2O = acetaldehyde + phosphate + H(+). Its function is as follows. Involved in phosphonate degradation. The polypeptide is Phosphonoacetaldehyde hydrolase (Bacteroides fragilis (strain ATCC 25285 / DSM 2151 / CCUG 4856 / JCM 11019 / LMG 10263 / NCTC 9343 / Onslow / VPI 2553 / EN-2)).